We begin with the raw amino-acid sequence, 224 residues long: Urease accessory protein UreF (224 aa).

The protein belongs to the UreF family. As to quaternary structure, ureD, UreF and UreG form a complex that acts as a GTP-hydrolysis-dependent molecular chaperone, activating the urease apoprotein by helping to assemble the nickel containing metallocenter of UreC. The UreE protein probably delivers the nickel.

It localises to the cytoplasm. Functionally, required for maturation of urease via the functional incorporation of the urease nickel metallocenter. This Nitrosococcus oceani (strain ATCC 19707 / BCRC 17464 / JCM 30415 / NCIMB 11848 / C-107) protein is Urease accessory protein UreF.